Reading from the N-terminus, the 654-residue chain is Carboxypeptidase Z (654 aa).

The N-terminal stretch at 1 to 20 (MPTMPLLLAALAALAVLALA) is a signal peptide. The 123-residue stretch at 43 to 165 (THSATCVDLH…APEEEGCYDP (123 aa)) folds into the FZ domain. 5 disulfides stabilise this stretch: C48/C114, C56/C107, C98/C134, C123/C162, and C127/C151. Residue N62 is glycosylated (N-linked (GlcNAc...) asparagine). The 317-residue stretch at 191 to 507 (AHHSYAQMVR…EPLLNFLEMV (317 aa)) folds into the Peptidase M14 domain. Positions 253 and 256 each coordinate Zn(2+). N286 carries N-linked (GlcNAc...) asparagine glycosylation. H385 is a binding site for Zn(2+). The Proton donor/acceptor role is filled by E477. Residues 596–630 (FLPGPSRALPRFQDPQREPTQMDFEPPRARRQPAS) are disordered.

The protein belongs to the peptidase M14 family. Zn(2+) is required as a cofactor.

It is found in the secreted. It localises to the extracellular space. Its subcellular location is the extracellular matrix. Its activity is regulated as follows. Inhibited by 2-mercaptomethyl-3-guanidinoethylthiopropanoic acid (MGTA) and guanidinoethylmercaptosuccinic acid (GEMSA). Inhibited by chelating agents such as EDTA and EGTA. Its function is as follows. Cleaves substrates with C-terminal arginine residues. Probably modulates the Wnt signaling pathway, by cleaving some undefined protein. May play a role in cleavage during prohormone processing. In Mus musculus (Mouse), this protein is Carboxypeptidase Z (Cpz).